Reading from the N-terminus, the 96-residue chain is Signal recognition particle 19 kDa protein (96 aa).

It belongs to the SRP19 family. As to quaternary structure, part of the signal recognition particle protein translocation system, which is composed of SRP and FtsY. Archaeal SRP consists of a 7S RNA molecule of 300 nucleotides and two protein subunits: SRP54 and SRP19.

Its subcellular location is the cytoplasm. Functionally, involved in targeting and insertion of nascent membrane proteins into the cytoplasmic membrane. Binds directly to 7S RNA and mediates binding of the 54 kDa subunit of the SRP. The sequence is that of Signal recognition particle 19 kDa protein from Pyrobaculum arsenaticum (strain DSM 13514 / JCM 11321 / PZ6).